Consider the following 657-residue polypeptide: DNA mismatch repair protein MutL (657 aa).

This sequence belongs to the DNA mismatch repair MutL/HexB family.

Functionally, this protein is involved in the repair of mismatches in DNA. It is required for dam-dependent methyl-directed DNA mismatch repair. May act as a 'molecular matchmaker', a protein that promotes the formation of a stable complex between two or more DNA-binding proteins in an ATP-dependent manner without itself being part of a final effector complex. In Streptococcus agalactiae serotype Ia (strain ATCC 27591 / A909 / CDC SS700), this protein is DNA mismatch repair protein MutL.